Reading from the N-terminus, the 316-residue chain is MAAPEPLRPRLCRLVRGEQGYGFHLHGEKGRRGQFIRRVEPGSPAEAAALRAGDRLVEVNGVNVEGETHHQVVQRIKAVEGETRLLVVDKETDEELRRRQLTCTEDMAQRGLPPAHDPWEPKPDWARAGSLSSDAGQKDVNGPPRELRPRLCHLRKGPQGYGFNLHSDKSRPGQYIRSVDPGSPAAHSGLCAQDRLIEVNGQNVEGLRHAEVVARIKAKEDEARLLLVDPETDEYFKRLRVTPTEEHVEGPLPSPITNGTSPAQDASAWKRDPFQESGLHLSPTAAEAKEKARATRVNKRAPQMDWNRKREIFSNF.

The 81-residue stretch at Leu11–Glu91 folds into the PDZ 1 domain. The disordered stretch occupies residues Gln109–Arg148. A phosphoserine mark is found at Ser130, Ser183, and Ser254. One can recognise a PDZ 2 domain in the interval Leu151–Glu231. Residues Thr244 to Gln303 are disordered. The span at Pro255–Gln264 shows a compositional bias: polar residues. Phosphoserine is present on Ser282.

As to quaternary structure, homodimer, and heterodimer with NHERF1. Binds ADRB2, SLC9A3, P2RY1, P2YR2, SRY, RDX, PDZK1 and LPAR2. Found in a complex with EZR, PODXL and NHERF2. Interacts (via the PDZ domains) with PODXL (via the C-terminal PDZ-binding motif DTHL); interaction is detected in glomerular epithelium cells. Binds PODXL. Interacts with SGK1 and KCNJ1/ROMK1. Interacts (via the PDZ domains) with SLC26A6. As to expression, detected in kidney glomeruli.

Its subcellular location is the endomembrane system. It is found in the nucleus. The protein localises to the apical cell membrane. In terms of biological role, scaffold protein that connects plasma membrane proteins with members of the ezrin/moesin/radixin family and thereby helps to link them to the actin cytoskeleton and to regulate their surface expression. Necessary for cAMP-mediated phosphorylation and inhibition of SLC9A3. May also act as scaffold protein in the nucleus. The protein is Na(+)/H(+) exchange regulatory cofactor NHE-RF2 (NHERF2) of Oryctolagus cuniculus (Rabbit).